The sequence spans 454 residues: Zeatin O-xylosyltransferase (454 aa).

The protein belongs to the UDP-glycosyltransferase family. High level in young seeds, less in older seeds and very low in roots.

The enzyme catalyses zeatin + UDP-alpha-D-xylose = O-beta-D-xylosylzeatin + UDP + H(+). Functionally, utilizes UDP-xylose as the sugar donor and catalyzes the formation of o-xylosylzeatin from zeatin. Does not act on UDP-glucose. The chain is Zeatin O-xylosyltransferase from Phaseolus vulgaris (Kidney bean).